A 274-amino-acid polypeptide reads, in one-letter code: Undecaprenyl-diphosphatase 1 (274 aa).

Transmembrane regions (helical) follow at residues 8–28 (WLLI…PIPV), 45–65 (IEGL…VIAI), 92–112 (FRIS…ALLF), 120–140 (LKQL…LWLI), 195–215 (FSFF…ISDI), 230–250 (IAFI…MNIM), and 253–273 (GKLI…LSLL).

Belongs to the UppP family.

Its subcellular location is the cell membrane. The enzyme catalyses di-trans,octa-cis-undecaprenyl diphosphate + H2O = di-trans,octa-cis-undecaprenyl phosphate + phosphate + H(+). Catalyzes the dephosphorylation of undecaprenyl diphosphate (UPP). Confers resistance to bacitracin. The polypeptide is Undecaprenyl-diphosphatase 1 (Halalkalibacterium halodurans (strain ATCC BAA-125 / DSM 18197 / FERM 7344 / JCM 9153 / C-125) (Bacillus halodurans)).